The primary structure comprises 350 residues: Protein RecA (350 aa).

67-74 lines the ATP pocket; that stretch reads GPESSGKT.

The protein belongs to the RecA family.

The protein resides in the cytoplasm. Can catalyze the hydrolysis of ATP in the presence of single-stranded DNA, the ATP-dependent uptake of single-stranded DNA by duplex DNA, and the ATP-dependent hybridization of homologous single-stranded DNAs. It interacts with LexA causing its activation and leading to its autocatalytic cleavage. This is Protein RecA from Chlamydia caviae (strain ATCC VR-813 / DSM 19441 / 03DC25 / GPIC) (Chlamydophila caviae).